The sequence spans 70 residues: Exodeoxyribonuclease 7 small subunit (70 aa).

This sequence belongs to the XseB family. In terms of assembly, heterooligomer composed of large and small subunits.

The protein localises to the cytoplasm. It carries out the reaction Exonucleolytic cleavage in either 5'- to 3'- or 3'- to 5'-direction to yield nucleoside 5'-phosphates.. In terms of biological role, bidirectionally degrades single-stranded DNA into large acid-insoluble oligonucleotides, which are then degraded further into small acid-soluble oligonucleotides. This chain is Exodeoxyribonuclease 7 small subunit, found in Magnetococcus marinus (strain ATCC BAA-1437 / JCM 17883 / MC-1).